A 356-amino-acid polypeptide reads, in one-letter code: DNA polymerase IV (356 aa).

The UmuC domain occupies 6 to 187; sequence IIHIDMDYFF…LDIGDFPGVG (182 aa). Mg(2+)-binding residues include Asp-10 and Asp-105. Glu-106 is a catalytic residue.

It belongs to the DNA polymerase type-Y family. In terms of assembly, monomer. Mg(2+) is required as a cofactor.

It localises to the cytoplasm. It catalyses the reaction DNA(n) + a 2'-deoxyribonucleoside 5'-triphosphate = DNA(n+1) + diphosphate. Its function is as follows. Poorly processive, error-prone DNA polymerase involved in untargeted mutagenesis. Copies undamaged DNA at stalled replication forks, which arise in vivo from mismatched or misaligned primer ends. These misaligned primers can be extended by PolIV. Exhibits no 3'-5' exonuclease (proofreading) activity. May be involved in translesional synthesis, in conjunction with the beta clamp from PolIII. This chain is DNA polymerase IV, found in Staphylococcus epidermidis (strain ATCC 35984 / DSM 28319 / BCRC 17069 / CCUG 31568 / BM 3577 / RP62A).